The following is a 75-amino-acid chain: Small ribosomal subunit protein bS18 (75 aa).

This sequence belongs to the bacterial ribosomal protein bS18 family. As to quaternary structure, part of the 30S ribosomal subunit. Forms a tight heterodimer with protein bS6.

Its function is as follows. Binds as a heterodimer with protein bS6 to the central domain of the 16S rRNA, where it helps stabilize the platform of the 30S subunit. The chain is Small ribosomal subunit protein bS18 from Shewanella frigidimarina (strain NCIMB 400).